A 508-amino-acid polypeptide reads, in one-letter code: Phytepsin (508 aa).

A signal peptide spans 1–27 (MGTRGLALALLAAVLLLQTVLPAASEA). The propeptide at 28-66 (EGLVRIALKKRPIDRNSRVATGLSGGEEQPLLSGANPLR) is activation peptide. The 422-residue stretch at 84–505 (YFGEIGVGTP…DYGKLRIGFA (422 aa)) folds into the Peptidase A1 domain. Residue aspartate 102 is part of the active site. 2 disulfides stabilise this stretch: cysteine 115-cysteine 121 and cysteine 280-cysteine 284. Aspartate 289 is a catalytic residue. A Saposin B-type domain is found at 314-419 (VVSQECKTIV…NQLCNRLPSP (106 aa)). 4 disulfide bridges follow: cysteine 319/cysteine 413, cysteine 344/cysteine 385, cysteine 350/cysteine 382, and cysteine 427/cysteine 464. Residue asparagine 399 is glycosylated (N-linked (GlcNAc...) asparagine).

This sequence belongs to the peptidase A1 family. In terms of assembly, heterodimer of two subunits (29 kDa and 11 kDa) processed from the precursor molecule. A large enzyme (32 kDa and 16 kDa) is an intermediate precursor form. Embryo and leaf.

The protein localises to the vacuole. The enzyme catalyses Prefers hydrophobic residues Phe, Val, Ile, Leu, and Ala at P1 and P1', but also cleaves -Phe-|-Asp- and -Asp-|-Asp- bonds in 2S albumin from plant seeds.. Its function is as follows. Involved in the breakdown of propeptides of storage proteins in protein-storage vacuoles. In Hordeum vulgare (Barley), this protein is Phytepsin.